We begin with the raw amino-acid sequence, 882 residues long: Protein PML (882 aa).

Positions 1-48 (MEPAPARSPRPQQDPARPQEPTMPPPETPSEGRQPSPSPSPTERAPAS) are disordered. Serine 8 is subject to Phosphoserine; by HIPK2. Phosphoserine; by HIPK2 and MAPK1 occurs at positions 36 and 38. Phosphoserine is present on serine 48. Residues cysteine 57 and cysteine 60 each coordinate Zn(2+). Residues 57 to 92 (CQQCQAEAKCPKLLPCLHTLCSGCLEASGMQCPICQ) form an RING-type zinc finger. Lysine 65 participates in a covalent cross-link: Glycyl lysine isopeptide (Lys-Gly) (interchain with G-Cter in SUMO1); alternate. Residue lysine 65 forms a Glycyl lysine isopeptide (Lys-Gly) (interchain with G-Cter in SUMO2); alternate linkage. Zn(2+) is bound by residues cysteine 72, histidine 74, cysteine 77, cysteine 80, cysteine 88, and cysteine 91. Residue serine 117 is modified to Phosphoserine; by CHEK2. The B box-type 1; atypical zinc-finger motif lies at 124 to 166 (DAQAVCTRCKESADFWCFECEQLLCAKCFEAHQWFLKHEARPL). Positions 129, 132, 151, and 155 each coordinate Zn(2+). Lysine 160 is covalently cross-linked (Glycyl lysine isopeptide (Lys-Gly) (interchain with G-Cter in SUMO1); alternate). Lysine 160 participates in a covalent cross-link: Glycyl lysine isopeptide (Lys-Gly) (interchain with G-Cter in SUMO2); alternate. Lysine 160 participates in a covalent cross-link: Glycyl lysine isopeptide (Lys-Gly) (interchain with G-Cter in SUMO1P1/SUMO5); alternate. A B box-type 2 zinc finger spans residues 183-236 (KTNNIFCSNPNHRTPTLTSIYCRGCSKPLCCSCALLDSSHSELKCDISAEIQQR). Cysteine 189, histidine 194, cysteine 215, and histidine 222 together coordinate Zn(2+). A coiled-coil region spans residues 228–253 (DISAEIQQRQEELDAMTQALQEQDSA). A Glycyl lysine isopeptide (Lys-Gly) (interchain with G-Cter in SUMO2); alternate cross-link involves residue lysine 380. Lysine 380 is covalently cross-linked (Glycyl lysine isopeptide (Lys-Gly) (interchain with G-Cter in /SUMO5); alternate). A Glycyl lysine isopeptide (Lys-Gly) (interchain with G-Cter in ubiquitin); alternate cross-link involves residue lysine 380. Lysine 394 is covalently cross-linked (Glycyl lysine isopeptide (Lys-Gly) (interchain with G-Cter in SUMO2)). Residue lysine 400 forms a Glycyl lysine isopeptide (Lys-Gly) (interchain with G-Cter in SUMO1P1/SUMO5); alternate linkage. Glycyl lysine isopeptide (Lys-Gly) (interchain with G-Cter in ubiquitin); alternate cross-links involve residues lysine 400 and lysine 401. A Glycyl lysine isopeptide (Lys-Gly) (interchain with G-Cter in SUMO2); alternate cross-link involves residue lysine 401. At serine 403 the chain carries Phosphoserine; by MAPK1 and MAPK7. An interaction with PER2 region spans residues 448-555 (GAHPVPVYAF…ASGAGEAEER (108 aa)). Lysine 460 participates in a covalent cross-link: Glycyl lysine isopeptide (Lys-Gly) (interchain with G-Cter in SUMO2). Residues 467–589 (DVSNTTTAQK…SESSDLQLEG (123 aa)) are disordered. Polar residues predominate over residues 468–484 (VSNTTTAQKRKCSQTQC). A Glycyl lysine isopeptide (Lys-Gly) (interchain with G-Cter in SUMO2); alternate cross-link involves residue lysine 476. Lysine 476 participates in a covalent cross-link: Glycyl lysine isopeptide (Lys-Gly) (interchain with G-Cter in ubiquitin); alternate. A Nuclear localization signal motif is present at residues 476–490 (KRKCSQTQCPRKVIK). Lysine 478 is covalently cross-linked (Glycyl lysine isopeptide (Lys-Gly) (interchain with G-Cter in SUMO2)). Residues lysine 487 and lysine 490 each participate in a glycyl lysine isopeptide (Lys-Gly) (interchain with G-Cter in SUMO2); alternate cross-link. N6-acetyllysine; alternate is present on lysine 487. A compositionally biased stretch (basic and acidic residues) spans 489 to 501 (IKMESEEGKEARL). Lysine 490 participates in a covalent cross-link: Glycyl lysine isopeptide (Lys-Gly) (interchain with G-Cter in SUMO1); alternate. Lysine 490 is covalently cross-linked (Glycyl lysine isopeptide (Lys-Gly) (interchain with G-Cter in SUMO1P1/SUMO5); alternate). Serine 493 bears the Phosphoserine mark. Residue lysine 497 forms a Glycyl lysine isopeptide (Lys-Gly) (interchain with G-Cter in SUMO1); alternate linkage. Residue lysine 497 forms a Glycyl lysine isopeptide (Lys-Gly) (interchain with G-Cter in SUMO2); alternate linkage. Lysine 497 participates in a covalent cross-link: Glycyl lysine isopeptide (Lys-Gly) (interchain with G-Cter in SUMO1P1/SUMO5); alternate. Phosphoserine is present on serine 504. At serine 505 the chain carries Phosphoserine; by MAPK1. Residues 505 to 516 (SPEQPRPSTSKA) show a composition bias toward polar residues. Position 512 is a phosphoserine (serine 512). Lysine 515 is modified (N6-acetyllysine). 3 positions are modified to phosphoserine: serine 518, serine 527, and serine 530. Phosphoserine; by CDK1 and CDK2 is present on serine 518. 2 positions are modified to phosphoserine; by MAPK1: serine 527 and serine 530. Residues 556–562 (VVVISSS) form a sumo interaction motif (SIM) region. Phosphoserine is present on serine 565. Residue serine 565 is modified to Phosphoserine; by CK2. Threonine 867 bears the Phosphothreonine mark.

As to quaternary structure, key component of PML bodies. PML bodies are formed by the interaction of PML homodimers (via SUMO-binding motif) with sumoylated PML, leading to the assembly of higher oligomers. Several types of PML bodies have been observed. PML bodies can form hollow spheres that can sequester target proteins inside. Interacts (via SUMO-binding motif) with sumoylated proteins. Interacts (via C-terminus) with p53/TP53. Recruits p53/TP53 and CHEK2 into PML bodies, which promotes p53/TP53 phosphorylation at 'Ser-20' and prevents its proteasomal degradation. Interacts with MDM2, and sequesters MDM2 in the nucleolus, thereby preventing ubiquitination of p53/TP53. Interaction with PML-RARA oncoprotein and certain viral proteins causes disassembly of PML bodies and abolishes the normal PML function. Interacts with HIPK2, TERT, SIRT1, TOPBP1, TRIM27 and TRIM69. Interacts with ELF4 (via C-terminus). Interacts with ITPR3. Interacts (in the cytoplasm) with TGFBR1, TGFBR2 and PKM. Interacts (via the coiled-coil domain and when sumoylated) with SATB1. Interacts with UBE2I; the interaction is enhanced by arsenic binding. Interacts (PML-RARA oncoprotein, via the coiled-coil domain) with UBE2I; the interaction is enhanced by arsenic binding and is required for PML-RARA oncoprotein sumoylation and inhibition of RARA transactivational activity. Interacts with RB1, PPP1A, SMAD2, SMAD3, DAXX, RPL11 and MTOR. Interacts with PPARGC1A and KAT2A. Interacts with CSNK2A1 and CSNK2A3. Interacts with ANKRD2; the interaction is direct. Interacts (via SUMO-interacting motif) with sumoylated MORC3. Isoform PML-1, isoform PML-2, isoform PML-3, isoform PML-4, isoform PML-5 and isoform PML-6 interact with RNF4. Isoform PML-1 interacts with NLRP3. Isoform PML-1, isoform PML-2, isoform PML-3, isoform PML-4 and isoform PML-5 interact with MAGEA2, RBL2, PER2 and E2F4. Isoform PML-2 interacts with CIITA. Isoform PML-2, isoform PML-3 and isoform PML-4 interact with TBX2. Isoform PML-4 interacts with RANBP2, HDAC7, KAT6A, WRN, PIN1, TBX3 and phosphorylated MAPK1/ERK2. Isoform PML-4 interacts with the CTNNB1 and TCF7L2/TCF4 complex. Isoform PML-4 preferentially interacts with MAPK7/BMK1 although other isoforms (isoform PML-1, isoform PML-2, isoform PML-3 and isoform PML-6) also interact with it. Isoform PML-12 interacts with PIAS1, PIAS2 (isoform PIAS2-alpha) and CSNK2A1/CK2. Interacts with TRIM16. Interacts with PRDM1/Blimp-1. Interacts (via RING-type zinc finger) with EIF4E; the interaction results in conformational changes of both interacting proteins and reduces EIF4E affinity for the 5' m7G cap of mRNA, thus reducing EIF4E-mediated mRNA nuclear export. (Microbial infection) Interacts with Lassa virus Z protein and rabies virus phosphoprotein. In terms of assembly, (Microbial infection) Isoform PML-1 interacts with herpes simplex virus-1/HHV-1 ICP0. As to quaternary structure, (Microbial infection) Isoform PML-2 interacts with human adenovirus 2 E1A and this interaction stimulates E1A-dependent transcriptional activation. (Microbial infection) Isoform PML-4 interacts with VZV capsid protein VP26/ORF23 capsid protein. In terms of assembly, (Microbial infection) The sumoylated isoform PML-4 interacts with encephalomyocarditis virus (EMCV) RNA-directed RNA polymerase 3D-POL (P3D-POL). As to quaternary structure, (Microbial infection) Isoform PML-6 interacts with moloney murine leukemia virus (MoMLV) integrase (IN) and reverse transcriptase (RT). (Microbial infection) Isoform PML-4 and isoform PML-5 interact with human adenovirus 5 E1B-55K protein; these interactions promote efficient subnuclear targeting of E1B-55K to PML nuclear bodies. In terms of assembly, (Microbial infection) Isoform PML-3 interacts (via RING-type zinc finger) with human foamy virus bel1/tas and bet. As to quaternary structure, (Microbial infection) Interacts with human cytomegalovirus (HHV-5) immediate early protein IE1; this interaction mediates PML desumoylation and PML-mediated sumoylation of IE1. In terms of processing, ubiquitinated; mediated by RNF4, RNF111, UHRF1, UBE3A/E6AP, BCR(KLHL20) E3 ubiquitin ligase complex E3 ligase complex, SIAH1 or SIAH2 and leading to subsequent proteasomal degradation. Ubiquitination by BCR(KLHL20) E3 ubiquitin ligase complex E3 ligase complex requires CDK1/2-mediated phosphorylation at Ser-518 which in turn is recognized by prolyl-isopeptidase PIN1 and PIN1-catalyzed isomerization further potentiates PML interaction with KLHL20. 'Lys-6'-, 'Lys-11'-, 'Lys-48'- and 'Lys-63'-linked polyubiquitination by RNF4 is polysumoylation-dependent. Ubiquitination by RNF111 is polysumoylation-dependent. Post-translationally, sumoylation regulates PML's: stability in response to extracellular or intracellular stimuli, transcription directly and indirectly, through sequestration of or dissociation of the transcription factors from PML-NBs, ability to regulate apoptosis and its anti-viral activities. It is also essential for: maintaining proper PML nuclear bodies (PML-NBs) structure and normal function, recruitment of components of PML-NBs, the turnover and retention of PML in PML-NBs and the integrity of PML-NBs. Undergoes 'Lys-11'-linked sumoylation. Sumoylation on all three sites (Lys-65, Lys-160 and Lys-490) is required for nuclear body formation. Sumoylation on Lys-160 is a prerequisite for sumoylation on Lys-65. Lys-65 and Lys-160 are sumoylated by PISA1 and PIAS2. PIAS1-mediated sumoylation of PML promotes its interaction with CSNK2A1/CK2 and phosphorylation at Ser-565 which in turn triggers its ubiquitin-mediated degradation. PIAS1-mediated sumoylation of PML-RARA promotes its ubiquitin-mediated degradation. The PML-RARA fusion protein requires the coiled-coil domain for sumoylation. Sumoylation at Lys-490 by RANBP2 is essential for the proper assembly of PML-NBs. SUMO1P1/SUMO5 conjugated PML at Lys-160, Lys-380, Lys-400, Lys-490 and Lys-497, but Lys-380, Lys-400 and Lys-497 are not key acceptor lysines. SUMO1P1/SUMO5 forms polymeric chain on Lys-160 of PML by successive conjugation at 'Lys-18'; facilitating recruitment of PML-NB components, which enlarges PML. SUMO1P1/SUMO5 conjugation of PML increases SUMO2/3 conjugation, which leads to the recruitment of RNF4 and ubiquitin-dependent disintegration of PML-NBs. SUMO1P1/SUMO5 monoconjugated Lys-490. DNA damage triggers its sumoylation while some but not all viral infections can abolish sumoylation. Desumoylated by SENP1, SENP2, SENP3, SENP5 and SENP6. Arsenic induces PML and PML-RARA polysumoylation and their subsequent RNF4-dependent ubiquitination and proteasomal degradation, and is used as treatment in acute promyelocytic leukemia (APL). The nuclear isoforms (isoform PML-1, isoform PML-2, isoform PML-3, isoform PML-4, isoform PML-5 and isoform PML-6) show an increased sumoylation in response to arsenic trioxide. The cytoplasmic isoform PML-7 is not sumoylated. Phosphorylation is a major regulatory mechanism that controls PML protein abundance and the number and size of PML nuclear bodies (PML-NBs). Phosphorylated in response to DNA damage, probably by ATR. HIPK2-mediated phosphorylation at Ser-8, Ser-36 and Ser-38 leads to increased accumulation of PML protein and its sumoylation and is required for the maximal pro-apoptotic activity of PML after DNA damage. CHEK2-mediated phosphorylation at Ser-117 is important for PML-mediated apoptosis following DNA damage. MAPK1-mediated phosphorylations at Ser-403, Ser-505, Ser-527 and Ser-530 and CDK1/2-mediated phosphorylation at Ser-518 promote PIN1-dependent PML degradation. CK2-mediated phosphorylation at Ser-565 primes PML ubiquitination via an unidentified ubiquitin ligase. In terms of processing, (Microbial infection) Upon infection with Epstein-Barr virus, phosphorylated by CK2. Viral EBNA1 increases the association of CK2 with PML proteins, which increases PML phosphorylation by CK2, triggering the USP7-dependent polyubiquitylation and degradation of PML. Post-translationally, acetylation at Lys-487 is essential for its nuclear localization. Deacetylated at Lys-487 by SIRT1 and this deacetylation promotes PML control of PER2 nuclear localization. (Microbial infection) Immediate early protein IE1 of human cytomegalovirus (HHV-5) interferes with the sumoylation of PML. Immediate early protein IE1 inhibits PML de novo sumoylation. In terms of processing, (Microbial infection) Cleaved at two different sites by enterovirus 71 protease 3C, leading to impaired PML-Nuclear bodies formation.

Its subcellular location is the nucleus. It is found in the nucleoplasm. It localises to the cytoplasm. The protein resides in the PML body. The protein localises to the nucleolus. Its subcellular location is the endoplasmic reticulum membrane. It is found in the early endosome membrane. The protein operates within protein modification; protein sumoylation. Its function is as follows. Functions via its association with PML-nuclear bodies (PML-NBs) in a wide range of important cellular processes, including tumor suppression, transcriptional regulation, apoptosis, senescence, DNA damage response, and viral defense mechanisms. Acts as the scaffold of PML-NBs allowing other proteins to shuttle in and out, a process which is regulated by SUMO-mediated modifications and interactions. Inhibits EIF4E-mediated mRNA nuclear export by reducing EIF4E affinity for the 5' 7-methylguanosine (m7G) cap of target mRNAs. Isoform PML-4 has a multifaceted role in the regulation of apoptosis and growth suppression: activates RB1 and inhibits AKT1 via interactions with PP1 and PP2A phosphatases respectively, negatively affects the PI3K pathway by inhibiting MTOR and activating PTEN, and positively regulates p53/TP53 by acting at different levels (by promoting its acetylation and phosphorylation and by inhibiting its MDM2-dependent degradation). Isoform PML-4 also: acts as a transcriptional repressor of TBX2 during cellular senescence and the repression is dependent on a functional RBL2/E2F4 repressor complex, regulates double-strand break repair in gamma-irradiation-induced DNA damage responses via its interaction with WRN, acts as a negative regulator of telomerase by interacting with TERT, and regulates PER2 nuclear localization and circadian function. Isoform PML-6 inhibits specifically the activity of the tetrameric form of PKM. The nuclear isoforms (isoform PML-1, isoform PML-2, isoform PML-3, isoform PML-4 and isoform PML-5) in concert with SATB1 are involved in local chromatin-loop remodeling and gene expression regulation at the MHC-I locus. Isoform PML-2 is required for efficient IFN-gamma induced MHC II gene transcription via regulation of CIITA. Cytoplasmic PML is involved in the regulation of the TGF-beta signaling pathway. PML also regulates transcription activity of ELF4 and can act as an important mediator for TNF-alpha- and IFN-alpha-mediated inhibition of endothelial cell network formation and migration. In terms of biological role, exhibits antiviral activity against both DNA and RNA viruses. The antiviral activity can involve one or several isoform(s) and can be enhanced by the permanent PML-NB-associated protein DAXX or by the recruitment of p53/TP53 within these structures. Isoform PML-4 restricts varicella zoster virus (VZV) via sequestration of virion capsids in PML-NBs thereby preventing their nuclear egress and inhibiting formation of infectious virus particles. The sumoylated isoform PML-4 restricts rabies virus by inhibiting viral mRNA and protein synthesis. The cytoplasmic isoform PML-14 can restrict herpes simplex virus-1 (HHV-1) replication by sequestering the viral E3 ubiquitin-protein ligase ICP0 in the cytoplasm. Isoform PML-6 shows restriction activity towards human cytomegalovirus (HHV-5) and influenza A virus strains PR8(H1N1) and ST364(H3N2). Sumoylated isoform PML-4 and isoform PML-12 show antiviral activity against encephalomyocarditis virus (EMCV) by promoting nuclear sequestration of viral polymerase (P3D-POL) within PML NBs. Isoform PML-3 exhibits antiviral activity against poliovirus by inducing apoptosis in infected cells through the recruitment and the activation of p53/TP53 in the PML-NBs. Isoform PML-3 represses human foamy virus (HFV) transcription by complexing the HFV transactivator, bel1/tas, preventing its binding to viral DNA. PML may positively regulate infectious hepatitis C viral (HCV) production and isoform PML-2 may enhance adenovirus transcription. Functions as an E3 SUMO-protein ligase that sumoylates (HHV-5) immediate early protein IE1, thereby participating in the antiviral response. Isoforms PML-3 and PML-6 display the highest levels of sumoylation activity. In Homo sapiens (Human), this protein is Protein PML (PML).